A 101-amino-acid polypeptide reads, in one-letter code: Protein translation factor SUI1 homolog (101 aa).

This sequence belongs to the SUI1 family.

The protein is Protein translation factor SUI1 homolog of Aeropyrum pernix (strain ATCC 700893 / DSM 11879 / JCM 9820 / NBRC 100138 / K1).